The primary structure comprises 155 residues: Small ribosomal subunit protein uS7 (155 aa).

The protein belongs to the universal ribosomal protein uS7 family. As to quaternary structure, part of the 30S ribosomal subunit. Contacts proteins S9 and S11.

Its function is as follows. One of the primary rRNA binding proteins, it binds directly to 16S rRNA where it nucleates assembly of the head domain of the 30S subunit. Is located at the subunit interface close to the decoding center, probably blocks exit of the E-site tRNA. The sequence is that of Small ribosomal subunit protein uS7 from Chloroherpeton thalassium (strain ATCC 35110 / GB-78).